A 284-amino-acid chain; its full sequence is MRRLPAVAGSFYESDPKKLKMQIEWSFRHNIGPRDIPKQSYEKKKRDNLFFIVPHAGYIYSGPVAAHSYYYLASEGKPDVVIILGPNHTGLGSYVSAWPKGEWETPLGSVKVDEEVLMQLVMESEVIDLEEKSHLYEHSIEVQLPFLQYFFDDNFKIVPIVIMMQTPEIAEFLADAIYKVIQKYSDKDIVVLASSDMNHYDPHEITMKKDEEAIEKIQQLDYRGLYEVVEGKDVTLCGYGPIMVSLILAKKLGKKAYILKHATSGDTSGPKDSVVGYLAARFGS.

This sequence belongs to the MEMO1 family.

The polypeptide is MEMO1 family protein SSO0066 (Saccharolobus solfataricus (strain ATCC 35092 / DSM 1617 / JCM 11322 / P2) (Sulfolobus solfataricus)).